A 333-amino-acid chain; its full sequence is tRNA N6-adenosine threonylcarbamoyltransferase (333 aa).

Residues histidine 111 and histidine 115 each coordinate Fe cation. Residues 134-138, aspartate 167, glycine 180, and asparagine 272 each bind substrate; that span reads LVSGG. Aspartate 300 contacts Fe cation.

This sequence belongs to the KAE1 / TsaD family. It depends on Fe(2+) as a cofactor.

Its subcellular location is the cytoplasm. The enzyme catalyses L-threonylcarbamoyladenylate + adenosine(37) in tRNA = N(6)-L-threonylcarbamoyladenosine(37) in tRNA + AMP + H(+). In terms of biological role, required for the formation of a threonylcarbamoyl group on adenosine at position 37 (t(6)A37) in tRNAs that read codons beginning with adenine. Is involved in the transfer of the threonylcarbamoyl moiety of threonylcarbamoyl-AMP (TC-AMP) to the N6 group of A37, together with TsaE and TsaB. TsaD likely plays a direct catalytic role in this reaction. In Legionella pneumophila subsp. pneumophila (strain Philadelphia 1 / ATCC 33152 / DSM 7513), this protein is tRNA N6-adenosine threonylcarbamoyltransferase.